We begin with the raw amino-acid sequence, 570 residues long: MKMSNMLVGTLREVPAEAEIESHKLMLRAGLMRKMAAGIYNYMPLGLKVIENVKNIVREEMNNAGAQEFLASALIPAELWQESGRWDAYGAEMFRLKDRHNRDFCLGPTHEEVFTDIVRNEIKSYKQLPLNLYQIQTKYRDERRPRFGVMRSREFIMKDGYSFDKDQEGLDLAYEKMRKAYVNIFNRCGLDAKAVAADSGAIGGSGSAEFMVKSEVGEDDVVFCTACDYAANIEKAPSTPEHAEKEELMEVEKVETPAVKSIEDLAKFFECSPKKIAKTLIFQADDKVVAVVLRGDREANEVKIANAIGEVIELEMASEEAVKEATGAAVGFAGPMGIKVDMLLVDQEVANMYNFIIGANETDMHLKNVNYGRDFEGIVGDFRNVTIGEKCPECGKEITISRGTEVGHIFKLGTKYSESMGATFIDEDGKAKPFIMGCYGIGVTRTVASIIEQHNDENGIIWPLEVAPYHVSVIPANVKNEEQATKAEEIYNELRKMGVEALLDDRKERAGVKFKDSELMGIPMRITVGKMIGEGQVEFKLRNGGEVETLSIEEVYNRVREEFERANLSL.

Belongs to the class-II aminoacyl-tRNA synthetase family. ProS type 1 subfamily. As to quaternary structure, homodimer.

The protein resides in the cytoplasm. It catalyses the reaction tRNA(Pro) + L-proline + ATP = L-prolyl-tRNA(Pro) + AMP + diphosphate. Catalyzes the attachment of proline to tRNA(Pro) in a two-step reaction: proline is first activated by ATP to form Pro-AMP and then transferred to the acceptor end of tRNA(Pro). As ProRS can inadvertently accommodate and process non-cognate amino acids such as alanine and cysteine, to avoid such errors it has two additional distinct editing activities against alanine. One activity is designated as 'pretransfer' editing and involves the tRNA(Pro)-independent hydrolysis of activated Ala-AMP. The other activity is designated 'posttransfer' editing and involves deacylation of mischarged Ala-tRNA(Pro). The misacylated Cys-tRNA(Pro) is not edited by ProRS. This chain is Proline--tRNA ligase, found in Clostridium perfringens (strain ATCC 13124 / DSM 756 / JCM 1290 / NCIMB 6125 / NCTC 8237 / Type A).